We begin with the raw amino-acid sequence, 98 residues long: Citrate lyase acyl carrier protein (98 aa).

Ser-14 carries the O-(phosphoribosyl dephospho-coenzyme A)serine modification.

It belongs to the CitD family. As to quaternary structure, oligomer with a subunit composition of (alpha,beta,gamma)6.

It is found in the cytoplasm. Functionally, covalent carrier of the coenzyme of citrate lyase. This Albidiferax ferrireducens (strain ATCC BAA-621 / DSM 15236 / T118) (Rhodoferax ferrireducens) protein is Citrate lyase acyl carrier protein.